We begin with the raw amino-acid sequence, 843 residues long: Eisosome protein 1 (843 aa).

The disordered stretch occupies residues 1–54 (MSLISAVEDRDIHNIGKTSGGGSRTSSINSSKKSLKHGSKSLRKPKVYQTTGEP). S2 is subject to N-acetylserine. S2 carries the phosphoserine modification. Over residues 33 to 46 (KSLKHGSKSLRKPK) the composition is skewed to basic residues. S88 and S130 each carry phosphoserine. The tract at residues 120 to 176 (KMGPKVVRNNSITSATSKTSKESQTKRKSKESPGAAASKAYSMTMETTSLSSQTNSR) is disordered. Polar residues-rich tracts occupy residues 127 to 137 (RNNSITSATSK) and 163 to 176 (TMETTSLSSQTNSR). S182, S401, S584, and S710 each carry phosphoserine. The interval 717–843 (DLPTQLEKIE…QDAISNQEKK (127 aa)) is disordered. T720 carries the post-translational modification Phosphothreonine. Positions 752–764 (STAAKEATETSSA) are enriched in low complexity. Phosphoserine is present on residues S763 and S775. The span at 781–797 (SGKEDANDCKSAEHSKE) shows a compositional bias: basic and acidic residues. Polar residues predominate over residues 798-810 (ISVSQKAGNNKSL). Residues S816, S828, S829, and S838 each carry the phosphoserine modification.

It belongs to the EIS1 family.

Its subcellular location is the cytoplasmic granule. It localises to the cell membrane. Functionally, required for normal formation of eisosomes, large cytoplasmic protein assemblies that localize to specialized domains on plasma membrane and mark the site of endocytosis. This chain is Eisosome protein 1 (EIS1), found in Saccharomyces cerevisiae (strain JAY291) (Baker's yeast).